A 438-amino-acid polypeptide reads, in one-letter code: MYALGDWRRTHYSSEVNSEMDGQEIIIMGWNHSIRKLGKLVFIILRDREGTIQIVAPKQKVSEETFATAKSLGKEDVMAIKGKVVANEKAPAGFEVIPIEIKILNKADTPLPLDPSEKVSADIDTRLDKRFLDLRRPKIQSLFKLRSEVLKSIRNTFHDNGFIDVDTPKLVASATEGGTELFPISYFDKEAFLGQSPQLYKQMMMAAGFDRVFEIGPIFRAEEHNTRRHLNEAISIDCEMSFADEKDAMEILEKVINNAFTDIYNNNQKELQTLGIDLKVQETPFPRIEYTEAVDMVNAKGVEMEWGEDFSRPAEAALGEMMDGFYFITDWPTEIRPFYTLPNEDNPKLCKAFDLMYKDLEISSGAQRNHKYDLLVEGIKRMGLNPEGFGTYLEAFKYGMPPHSGWGVGIERLMMIMACQQNIRECVLFPRDRQRLTP.

Position 176 (E176) interacts with L-aspartate. The segment at 198–201 (QLYK) is aspartate. R220 contacts L-aspartate. Residues 220 to 222 (RAE), 228 to 230 (RHL), and E361 each bind ATP. 2 residues coordinate Mg(2+): E361 and S364. L-aspartate-binding residues include S364 and R368. 409 to 412 (GIER) contributes to the ATP binding site.

Belongs to the class-II aminoacyl-tRNA synthetase family. Type 2 subfamily. In terms of assembly, homodimer. Mg(2+) is required as a cofactor.

The protein resides in the cytoplasm. It catalyses the reaction tRNA(Asx) + L-aspartate + ATP = L-aspartyl-tRNA(Asx) + AMP + diphosphate. Its function is as follows. Aspartyl-tRNA synthetase with relaxed tRNA specificity since it is able to aspartylate not only its cognate tRNA(Asp) but also tRNA(Asn). Reaction proceeds in two steps: L-aspartate is first activated by ATP to form Asp-AMP and then transferred to the acceptor end of tRNA(Asp/Asn). The polypeptide is Aspartate--tRNA(Asp/Asn) ligase (Methanococcus aeolicus (strain ATCC BAA-1280 / DSM 17508 / OCM 812 / Nankai-3)).